The following is a 313-amino-acid chain: Protein FixB (313 aa).

255–283 (LYLAVGISGQIQHMVGANASQTIFAINKD) provides a ligand contact to FAD.

Belongs to the ETF alpha-subunit/FixB family. As to quaternary structure, heterodimer of FixA and FixB.

Its pathway is amine and polyamine metabolism; carnitine metabolism. Functionally, required for anaerobic carnitine reduction. May bring reductant to CaiA. The polypeptide is Protein FixB (Escherichia coli O8 (strain IAI1)).